Consider the following 418-residue polypeptide: Endoglucanase EG-II (418 aa).

A signal peptide spans 1–21 (MNKSVAPLLLAASILYGGAVA). Q22 is modified (pyrrolidone carboxylic acid). In terms of domain architecture, CBM1 spans 22-57 (QQTVWGQCGGIGWSGPTNCAPGSACSTLNPYYAQCI). Positions 58-91 (PGATTITTSTRPPSGPTTTTRATSTSSSTPPTSS) are linker. The interval 63 to 91 (ITTSTRPPSGPTTTTRATSTSSSTPPTSS) is disordered. The tract at residues 92–418 (GVRFAGVNIA…SLVSSCLARK (327 aa)) is catalytic. A disulfide bridge links C107 with C113. The N-linked (GlcNAc) asparagine glycan is linked to N124. The cysteines at positions 183 and 190 are disulfide-linked. Residue E239 is the Proton donor/acceptor of the active site. 2 cysteine pairs are disulfide-bonded: C323/C359 and C364/C414. The Nucleophile role is filled by E350.

The protein belongs to the glycosyl hydrolase 5 (cellulase A) family.

The protein localises to the secreted. The catalysed reaction is Endohydrolysis of (1-&gt;4)-beta-D-glucosidic linkages in cellulose, lichenin and cereal beta-D-glucans.. Endoglucanase (EG) that cleaves the internal beta-1,4-glucosidic bonds in cellulose. The degradation of cellulose involves an interplay between different cellulolytic enzymes. Hydrolysis starts with EGs, which cut internal glycosidic linkages to reduce the polymerization degree of the substrate and creates new chain ends for exocellobiohydrolases (CBHs). The CBH release the disaccharide cellobiose from the non-reducing end of the cellulose polymer chain. Finally, beta-1,4-glucosidases hydrolyze the cellobiose and other short cello-oligosaccharides into glucose units. The sequence is that of Endoglucanase EG-II (egl2) from Hypocrea jecorina (Trichoderma reesei).